Consider the following 461-residue polypeptide: Tumor necrosis factor receptor superfamily member 1A (461 aa).

A signal peptide spans 1 to 29 (MGLSTVPGLLLPLVLRALLVDVYPAGVHG). At 30–210 (LVLHPGDREK…RNDFQDTGTT (181 aa)) the chain is on the extracellular side. TNFR-Cys repeat units follow at residues 43–82 (LCPQ…TDCR), 83–125 (ECDN…DTVC), 126–166 (GCRK…DTIC), and 167–195 (NCHS…NLCP). 7 disulfides stabilise this stretch: Cys-44–Cys-58, Cys-59–Cys-72, Cys-62–Cys-81, Cys-84–Cys-99, Cys-102–Cys-117, Cys-105–Cys-125, and Cys-127–Cys-143. A glycan (N-linked (GlcNAc...) asparagine) is linked at Asn-54. An N-linked (GlcNAc...) asparagine glycan is attached at Asn-86. Asn-145 and Asn-151 each carry an N-linked (GlcNAc...) asparagine glycan. 5 disulfides stabilise this stretch: Cys-146-Cys-158, Cys-149-Cys-166, Cys-168-Cys-179, Cys-182-Cys-194, and Cys-185-Cys-190. Residues 211–233 (VLLPLVIFFGLCLAFFLFVGLAC) traverse the membrane as a helical segment. Topologically, residues 234–461 (RYQRWKPKLY…RLAPAPHLLR (228 aa)) are cytoplasmic. The segment at 340–350 (LPKWGGSAHSA) is N-SMase activation domain (NSD). The 86-residue stretch at 362–447 (PATLYAVVDG…GCLEDIEEAL (86 aa)) folds into the Death domain.

As to quaternary structure, binding of TNF to the extracellular domain leads to homotrimerization. The aggregated death domains provide a novel molecular interface that interacts specifically with the death domain of TRADD. Various TRADD-interacting proteins such as TRAFS, RIPK1 and possibly FADD, are recruited to the complex by their association with TRADD. This complex activates at least two distinct signaling cascades, apoptosis and NF-kappa-B signaling. Interacts with BAG4, BABAM2, FEM1B, GRB2, SQSTM1 and TRPC4AP. Interacts with DAB2IP. Interacts directly with NOL3 (via CARD domain); inhibits TNF-signaling pathway. Interacts with SH3RF2, TRADD and RIPK1. SH3RF2 facilitates the recruitment of RIPK1 and TRADD to TNFRSF1A in a TNF-alpha-dependent process. Interacts with PGLYRP1; this interaction is important for cell death induction. Interacts (via death domain) with MADD (via death domain).

It is found in the cell membrane. The protein localises to the golgi apparatus membrane. Its function is as follows. Receptor for TNFSF2/TNF-alpha and homotrimeric TNFSF1/lymphotoxin-alpha. The adapter molecule FADD recruits caspase-8 to the activated receptor. The resulting death-inducing signaling complex (DISC) performs caspase-8 proteolytic activation which initiates the subsequent cascade of caspases (aspartate-specific cysteine proteases) mediating apoptosis. The polypeptide is Tumor necrosis factor receptor superfamily member 1A (TNFRSF1A) (Sus scrofa (Pig)).